The chain runs to 286 residues: Probable endonuclease 4 (286 aa).

Zn(2+) is bound by residues His67, His107, Glu144, Asp178, His181, His215, Asp228, His230, and Glu260.

The protein belongs to the AP endonuclease 2 family. It depends on Zn(2+) as a cofactor.

It carries out the reaction Endonucleolytic cleavage to 5'-phosphooligonucleotide end-products.. Functionally, endonuclease IV plays a role in DNA repair. It cleaves phosphodiester bonds at apurinic or apyrimidinic (AP) sites, generating a 3'-hydroxyl group and a 5'-terminal sugar phosphate. This chain is Probable endonuclease 4, found in Chloroflexus aggregans (strain MD-66 / DSM 9485).